The following is a 300-amino-acid chain: 33 kDa chaperonin (300 aa).

Disulfide bonds link cysteine 235-cysteine 237 and cysteine 269-cysteine 272.

The protein belongs to the HSP33 family. Post-translationally, under oxidizing conditions two disulfide bonds are formed involving the reactive cysteines. Under reducing conditions zinc is bound to the reactive cysteines and the protein is inactive.

The protein resides in the cytoplasm. In terms of biological role, redox regulated molecular chaperone. Protects both thermally unfolding and oxidatively damaged proteins from irreversible aggregation. Plays an important role in the bacterial defense system toward oxidative stress. This Pseudomonas fluorescens (strain SBW25) protein is 33 kDa chaperonin.